The following is a 213-amino-acid chain: ATP phosphoribosyltransferase (213 aa).

This sequence belongs to the ATP phosphoribosyltransferase family. Short subfamily. As to quaternary structure, heteromultimer composed of HisG and HisZ subunits.

Its subcellular location is the cytoplasm. It carries out the reaction 1-(5-phospho-beta-D-ribosyl)-ATP + diphosphate = 5-phospho-alpha-D-ribose 1-diphosphate + ATP. The protein operates within amino-acid biosynthesis; L-histidine biosynthesis; L-histidine from 5-phospho-alpha-D-ribose 1-diphosphate: step 1/9. Catalyzes the condensation of ATP and 5-phosphoribose 1-diphosphate to form N'-(5'-phosphoribosyl)-ATP (PR-ATP). Has a crucial role in the pathway because the rate of histidine biosynthesis seems to be controlled primarily by regulation of HisG enzymatic activity. The polypeptide is ATP phosphoribosyltransferase (Bacillus pumilus (strain SAFR-032)).